The sequence spans 130 residues: Large ribosomal subunit protein bL17 (130 aa).

This sequence belongs to the bacterial ribosomal protein bL17 family. As to quaternary structure, part of the 50S ribosomal subunit. Contacts protein L32.

This chain is Large ribosomal subunit protein bL17, found in Shewanella halifaxensis (strain HAW-EB4).